A 919-amino-acid chain; its full sequence is Periodic tryptophan protein 2 homolog (919 aa).

WD repeat units follow at residues 12–50 (GTVY…SDTL), 53–93 (ATRY…LHHF), 94–132 (HFKG…REFN), 142–181 (GPYD…NLIY), and 186–225 (GHKD…EGLR). The segment at 238 to 267 (QREEEEEEEEDQEGDRETTIRGKATPAEEE) is disordered. Residues 240-251 (EEEEEEEEDQEG) show a composition bias toward acidic residues. A compositionally biased stretch (basic and acidic residues) spans 252–267 (DRETTIRGKATPAEEE). 9 WD repeats span residues 286–325 (GDFN…LIHS), 328–368 (ISDQ…YVLK), 371–410 (GHFN…CFVT), 413–452 (EHSS…NFRT), 456–498 (PRPT…DVLS), 499–538 (GHEG…RTKE), 541–580 (ALTS…QTGS), 603–642 (AKGK…LMKR), and 700–740 (KPEI…DPFE). The disordered stretch occupies residues 882–919 (TKRSLDPLGSEEEAEASEDDSLHLLGGGGRDSEEEMLA). Over residues 890 to 900 (GSEEEAEASED) the composition is skewed to acidic residues. S898 and S902 each carry phosphoserine.

The protein belongs to the WD repeat PWP2 family. As to quaternary structure, part of the small subunit (SSU) processome, composed of more than 70 proteins and the RNA chaperone small nucleolar RNA (snoRNA) U3.

Its subcellular location is the nucleus. The protein localises to the nucleolus. Functionally, part of the small subunit (SSU) processome, first precursor of the small eukaryotic ribosomal subunit. During the assembly of the SSU processome in the nucleolus, many ribosome biogenesis factors, an RNA chaperone and ribosomal proteins associate with the nascent pre-rRNA and work in concert to generate RNA folding, modifications, rearrangements and cleavage as well as targeted degradation of pre-ribosomal RNA by the RNA exosome. This chain is Periodic tryptophan protein 2 homolog, found in Homo sapiens (Human).